We begin with the raw amino-acid sequence, 298 residues long: Pantothenate synthetase (298 aa).

30-37 (MGNLHEGH) contacts ATP. Histidine 37 (proton donor) is an active-site residue. Residue glutamine 61 participates in (R)-pantoate binding. Glutamine 61 contacts beta-alanine. Position 149-152 (149-152 (GEKD)) interacts with ATP. Glutamine 155 is a (R)-pantoate binding site. ATP contacts are provided by residues valine 178 and 186-189 (MSSR).

This sequence belongs to the pantothenate synthetase family. Homodimer.

The protein resides in the cytoplasm. It catalyses the reaction (R)-pantoate + beta-alanine + ATP = (R)-pantothenate + AMP + diphosphate + H(+). Its pathway is cofactor biosynthesis; (R)-pantothenate biosynthesis; (R)-pantothenate from (R)-pantoate and beta-alanine: step 1/1. Functionally, catalyzes the condensation of pantoate with beta-alanine in an ATP-dependent reaction via a pantoyl-adenylate intermediate. This is Pantothenate synthetase from Aliivibrio salmonicida (strain LFI1238) (Vibrio salmonicida (strain LFI1238)).